The primary structure comprises 530 residues: Probable basic-leucine zipper transcription factor L (530 aa).

2 stretches are compositionally biased toward low complexity: residues 1 to 17 (MYSPSSPQSSEPMSPES) and 24 to 39 (SINNSNSSNNSSANQS). The interval 1-76 (MYSPSSPQSS…QSAALSRSRK (76 aa)) is disordered. In terms of domain architecture, bZIP spans 55 to 118 (VKKRQVRLLK…FETKSRLEFL (64 aa)). Residues 56–77 (KKRQVRLLKNRQSAALSRSRKK) are basic motif. Residues 83–104 (LESKAQELTHSTQELHVQYNKI) are leucine-zipper. 3 disordered regions span residues 142 to 177 (NNIKSHSRSNSSSSSLSSSPTTPNTTTTTTTSTTPV), 216 to 258 (SQNK…SPTP), and 389 to 481 (HHHH…SQIN). Low complexity-rich tracts occupy residues 149-176 (RSNSSSSSLSSSPTTPNTTTTTTTSTTP) and 220-247 (NNNNNNNNNNNNNNNNNNNNNNNNNTTN). Positions 248–257 (LLDQQQQSPT) are enriched in polar residues. The segment covering 436–478 (SSSPSSSSTSSPSTSSPSTPKSMGFPSPIFIGSSGSGPSSSGS) has biased composition (low complexity).

Belongs to the bZIP family.

The protein resides in the nucleus. Probable transcriptional regulator. This is Probable basic-leucine zipper transcription factor L (bzpL) from Dictyostelium discoideum (Social amoeba).